Here is a 54-residue protein sequence, read N- to C-terminus: ATP synthase protein 8 (54 aa).

A helical transmembrane segment spans residues 8 to 28; the sequence is WWLLNFFLGWTSLLVIFIILL.

This sequence belongs to the ATPase protein 8 family. As to quaternary structure, F-type ATPases have 2 components, CF(1) - the catalytic core - and CF(0) - the membrane proton channel.

Its subcellular location is the mitochondrion membrane. Functionally, mitochondrial membrane ATP synthase (F(1)F(0) ATP synthase or Complex V) produces ATP from ADP in the presence of a proton gradient across the membrane which is generated by electron transport complexes of the respiratory chain. F-type ATPases consist of two structural domains, F(1) - containing the extramembraneous catalytic core and F(0) - containing the membrane proton channel, linked together by a central stalk and a peripheral stalk. During catalysis, ATP synthesis in the catalytic domain of F(1) is coupled via a rotary mechanism of the central stalk subunits to proton translocation. Part of the complex F(0) domain. Minor subunit located with subunit a in the membrane. In Patiria pectinifera (Starfish), this protein is ATP synthase protein 8 (MT-ATP8).